Consider the following 335-residue polypeptide: MIAMLTVLLYLGLILEPRTAVQAGHLPKPIIWAEPGSVIAAYTSVITWCQGSWEAQYYHLYKEKSVNPWDTQVPLETRNKAKFNIPSMTTSYAGIYKCYYESAAGFSEHSDAMELVMTGAYENPSLSVYPSSNVTSGVSISFSCSSSIVFGRFILIQEGKHGLSWTLDSQHQANQPSYATFVLDAVTPNHNGTFRCYGYFRNEPQVWSKPSNSLDLMISETKDQSSTPTEDGLETYQKILIGVLVSFLLLFFLLLFLILIGYQYGHKKKANASVKNTQSENNAELNSWNPQNEDPQGIVYAQVKPSRLQKDTACKETQDVTYAQLCIRTQEQNNS.

Positions 1–23 (MIAMLTVLLYLGLILEPRTAVQA) are cleaved as a signal peptide. The Extracellular portion of the chain corresponds to 24–238 (GHLPKPIIWA…TEDGLETYQK (215 aa)). 2 Ig-like C2-type domains span residues 42–125 (YTSV…ENPS) and 124–212 (PSLS…KPSN). A disulfide bond links Cys-49 and Cys-98. N-linked (GlcNAc...) asparagine glycans are attached at residues Asn-133 and Asn-191. A disulfide bond links Cys-144 and Cys-196. The helical transmembrane segment at 239 to 260 (ILIGVLVSFLLLFFLLLFLILI) threads the bilayer. Topologically, residues 261–335 (GYQYGHKKKA…CIRTQEQNNS (75 aa)) are cytoplasmic. 2 consecutive short sequence motifs (ITIM motif) follow at residues 298–303 (IVYAQV) and 320–325 (VTYAQL).

As to quaternary structure, interacts (when tyrosine phosphorylated) with SH2 domain-containing phosphatases PTPN6/SHP-1 and PTPN11/SHP-2; interaction with PTPN6 enhances inhibition of mast cell activation. Post-translationally, tyrosine phosphorylated. As to expression, expressed on mast cells and natural killer cells (at protein level). Expressed on neutrophils (at protein level). Expressed on eosinophils (at protein level). Expressed on dendritic cells (at protein level). Expressed on memory and marginal zone B cells (at protein level). Expressed on CD8 T cells (at protein level). Expressed in the uterus of pregnant mice where it is detected at day 4.0 of pregnancy with levels dropping at day 4.5. Highly expressed in the luminal epithelium of uterine endometrium with lower levels in the glandular epithelium.

Its subcellular location is the cell membrane. Functionally, inhibitory receptor involved in the down-regulation of the immune response. Receptor for FN1. Receptor for integrin ITGAV/ITGB3. Inhibits IgE-mediated mast cell activation, at least in part through interaction with ITGAV/ITGB3. Also inhibits KITLG/SCF-mediated mast cell activation. Through interaction with ITGAV/ITGB3, inhibits antibody production by memory and marginal zone B cells, probably by suppressing their differentiation into plasma cells. Inhibits IFNG production by CD8 T cells, CD4 T cells and natural killer cells. Inhibits antigen presentation by dendritic cells to T cells, preventing T cell activation. Inhibits lipopolysaccharide-mediated neutrophil-dependent vascular injury. Suppresses the allergic inflammatory response by inhibiting infiltration of neutrophils and eosinophils and preventing mast cell degranulation. Inhibits lysis by natural killer cells. This Mus musculus (Mouse) protein is Leukocyte immunoglobulin-like receptor subfamily B member 4A.